Here is a 287-residue protein sequence, read N- to C-terminus: 4-hydroxybenzoate octaprenyltransferase (287 aa).

A run of 6 helical transmembrane segments spans residues 41–61, 89–109, 133–153, 158–178, 202–224, and 266–286; these read WPLL…GCAM, WEAV…ILPL, FFAI…PMAF, DTVP…SVAY, FGRF…YVWI, and HNNW…LLAG.

Belongs to the UbiA prenyltransferase family. Requires Mg(2+) as cofactor.

Its subcellular location is the cell inner membrane. It carries out the reaction all-trans-octaprenyl diphosphate + 4-hydroxybenzoate = 4-hydroxy-3-(all-trans-octaprenyl)benzoate + diphosphate. It participates in cofactor biosynthesis; ubiquinone biosynthesis. In terms of biological role, catalyzes the prenylation of para-hydroxybenzoate (PHB) with an all-trans polyprenyl group. Mediates the second step in the final reaction sequence of ubiquinone-8 (UQ-8) biosynthesis, which is the condensation of the polyisoprenoid side chain with PHB, generating the first membrane-bound Q intermediate 3-octaprenyl-4-hydroxybenzoate. The protein is 4-hydroxybenzoate octaprenyltransferase of Burkholderia cenocepacia (strain HI2424).